The following is a 255-amino-acid chain: Pimeloyl-[acyl-carrier protein] methyl ester esterase (255 aa).

Residues Trp18, 78 to 79, and 139 to 143 each bind substrate; these read SL and FLALD. Ser78 functions as the Nucleophile in the catalytic mechanism. Residues Asp203 and His233 contribute to the active site. His233 provides a ligand contact to substrate.

This sequence belongs to the AB hydrolase superfamily. Carboxylesterase BioH family. In terms of assembly, monomer.

It is found in the cytoplasm. The catalysed reaction is 6-carboxyhexanoyl-[ACP] methyl ester + H2O = 6-carboxyhexanoyl-[ACP] + methanol + H(+). Its pathway is cofactor biosynthesis; biotin biosynthesis. Its function is as follows. The physiological role of BioH is to remove the methyl group introduced by BioC when the pimeloyl moiety is complete. It allows to synthesize pimeloyl-ACP via the fatty acid synthetic pathway through the hydrolysis of the ester bonds of pimeloyl-ACP esters. The polypeptide is Pimeloyl-[acyl-carrier protein] methyl ester esterase (Xylella fastidiosa (strain M12)).